The sequence spans 397 residues: Putative nickel insertion protein (397 aa).

The protein belongs to the LarC family.

This is Putative nickel insertion protein from Synechococcus sp. (strain JA-3-3Ab) (Cyanobacteria bacterium Yellowstone A-Prime).